The primary structure comprises 891 residues: DNA mismatch repair protein MutS (891 aa).

634–641 provides a ligand contact to ATP; that stretch reads GPNMGGKS.

Belongs to the DNA mismatch repair MutS family.

Its function is as follows. This protein is involved in the repair of mismatches in DNA. It is possible that it carries out the mismatch recognition step. This protein has a weak ATPase activity. This chain is DNA mismatch repair protein MutS, found in Burkholderia mallei (strain NCTC 10247).